A 491-amino-acid polypeptide reads, in one-letter code: MNANELTIADARDALAKGELSAVDLTMACLTAIDAGTPLNAFVHATPEIALDQARAADARRGAGAGALNGIPLGIKDLFCTRGVASQAASNILKGFKPEYESTVTSKLFEAGAVMLGKLNMDEFAMGSSNETSCYGDAVNPWKVDDRRLTPGGSSGGSAAAVAADLCLAATGTDTGGSIRQPAAFTGIVGIKPTYGRVSRWGIVAFASSLDQAGPMTKSVRDAAILLGAMAGHDPKDSTSADIPVPDFEAALTGDIRGRKIGIPREYRMEGMPAEIEALWARGREMLADAGAEIVDISLPHTKYALPAYYVIAPAEASSNLARYDGVRYGHRARLGQGDGIVDMYEKTRAEGFGKEVQRRVMIGTYVLSAGFYDAYYNRARKVRALIKRDFDEAFAAGVDAILTPATPSSAFGLGEMADADPVAMYLNDVFTVTVNLAGLPGISVPVGLDAKGLPLGLQLIGRPWDEAGLLNHAHVLERAAGFVEKPRKWW.

Catalysis depends on charge relay system residues K76 and S154. S178 (acyl-ester intermediate) is an active-site residue.

It belongs to the amidase family. GatA subfamily. As to quaternary structure, heterotrimer of A, B and C subunits.

It carries out the reaction L-glutamyl-tRNA(Gln) + L-glutamine + ATP + H2O = L-glutaminyl-tRNA(Gln) + L-glutamate + ADP + phosphate + H(+). In terms of biological role, allows the formation of correctly charged Gln-tRNA(Gln) through the transamidation of misacylated Glu-tRNA(Gln) in organisms which lack glutaminyl-tRNA synthetase. The reaction takes place in the presence of glutamine and ATP through an activated gamma-phospho-Glu-tRNA(Gln). The protein is Glutamyl-tRNA(Gln) amidotransferase subunit A of Cereibacter sphaeroides (strain ATCC 17023 / DSM 158 / JCM 6121 / CCUG 31486 / LMG 2827 / NBRC 12203 / NCIMB 8253 / ATH 2.4.1.) (Rhodobacter sphaeroides).